Reading from the N-terminus, the 275-residue chain is Large ribosomal subunit protein uL2c (275 aa).

Residues 224 to 263 (VMNPVDHPHGGGEGRAPIGRKRPLTPWGRPALGKKSRKNH) are disordered.

Belongs to the universal ribosomal protein uL2 family. Part of the 50S ribosomal subunit.

It localises to the plastid. The protein resides in the chloroplast. This chain is Large ribosomal subunit protein uL2c (rpl2), found in Chaetosphaeridium globosum (Charophycean green alga).